Here is a 926-residue protein sequence, read N- to C-terminus: Alpha-aminoadipic semialdehyde synthase, mitochondrial (926 aa).

A mitochondrion-targeting transit peptide spans 1-27 (MLRVSRTKLGRLSPSLSRGLHHKAVMA). The lysine-ketoglutarate reductase stretch occupies residues 28–455 (LRREDVNAWE…DAVIASNGML (428 aa)). Residues Lys-48 and Lys-56 each carry the N6-acetyllysine modification. Position 93 is an N6-acetyllysine; alternate (Lys-93). The residue at position 93 (Lys-93) is an N6-succinyllysine; alternate. Lys-128 carries the N6-acetyllysine modification. Lys-138 bears the N6-acetyllysine; alternate mark. Lys-138 is modified (N6-succinyllysine; alternate). Lys-274 carries the N6-succinyllysine modification. At Lys-286 the chain carries N6-acetyllysine; alternate. Lys-286 bears the N6-succinyllysine; alternate mark. Lys-333 carries the N6-succinyllysine modification. An N6-acetyllysine; alternate modification is found at Lys-458. An N6-succinyllysine; alternate modification is found at Lys-458. The interval 477–926 (MGTKKKVLVL…MYTTQSTIKL (450 aa)) is saccharopine dehydrogenase. Residues Ser-488, Asp-512, and Gln-516 each coordinate NAD(+). Lys-523 and Lys-535 each carry N6-acetyllysine; alternate. Residues Lys-523 and Lys-535 each carry the N6-succinyllysine; alternate modification. NAD(+) is bound by residues Leu-554, Ala-576, and Ser-577. 577 to 578 (SY) contacts L-saccharopine. At Lys-584 the chain carries N6-acetyllysine; alternate. Lys-584 bears the N6-succinyllysine; alternate mark. NAD(+)-binding residues include Leu-603, Asp-604, and Pro-605. Asp-604 lines the L-saccharopine pocket. L-saccharopine is bound at residue Arg-703. Residue Lys-707 is modified to N6-acetyllysine. 724–726 (TLR) lines the L-saccharopine pocket. Lys-732 is subject to N6-succinyllysine. Lys-739 is modified (N6-acetyllysine). Lys-761 carries the N6-acetyllysine; alternate modification. Lys-761 is modified (N6-succinyllysine; alternate). Lys-780 carries the post-translational modification N6-acetyllysine.

It in the N-terminal section; belongs to the AlaDH/PNT family. This sequence in the C-terminal section; belongs to the saccharopine dehydrogenase family. As to quaternary structure, homotetramer.

It is found in the mitochondrion. The enzyme catalyses L-saccharopine + NADP(+) + H2O = L-lysine + 2-oxoglutarate + NADPH + H(+). The catalysed reaction is L-saccharopine + NAD(+) + H2O = (S)-2-amino-6-oxohexanoate + L-glutamate + NADH + H(+). It functions in the pathway amino-acid degradation; L-lysine degradation via saccharopine pathway; glutaryl-CoA from L-lysine: step 1/6. Its pathway is amino-acid degradation; L-lysine degradation via saccharopine pathway; glutaryl-CoA from L-lysine: step 2/6. In terms of biological role, bifunctional enzyme that catalyzes the first two steps in lysine degradation. This Bos taurus (Bovine) protein is Alpha-aminoadipic semialdehyde synthase, mitochondrial.